The chain runs to 273 residues: Glucosamine-6-phosphate deaminase (273 aa).

Residue D72 is the Proton acceptor; for enolization step of the active site. The active-site For ring-opening step is the D141. Catalysis depends on H143, which acts as the Proton acceptor; for ring-opening step. E148 acts as the For ring-opening step in catalysis.

This sequence belongs to the glucosamine/galactosamine-6-phosphate isomerase family. As to quaternary structure, homohexamer.

The protein resides in the cytoplasm. The catalysed reaction is alpha-D-glucosamine 6-phosphate + H2O = beta-D-fructose 6-phosphate + NH4(+). Its pathway is nucleotide-sugar biosynthesis; UDP-N-acetyl-alpha-D-glucosamine biosynthesis; alpha-D-glucosamine 6-phosphate from D-fructose 6-phosphate: step 1/1. Functionally, catalyzes the reversible conversion of alpha-D-glucosamine 6-phosphate (GlcN-6P) into beta-D-fructose 6-phosphate (Fru-6P) and ammonium ion, a regulatory reaction step in de novo uridine diphosphate-N-acetyl-alpha-D-glucosamine (UDP-GlcNAc) biosynthesis via hexosamine pathway. This Anopheles gambiae (African malaria mosquito) protein is Glucosamine-6-phosphate deaminase (Gnpda1).